The chain runs to 294 residues: Store-operated calcium entry regulator STIMATE (294 aa).

Residues 1–22 are disordered; it reads MQGPAGNASRGLPGGPPSTVAS. The Cytoplasmic portion of the chain corresponds to 1 to 28; it reads MQGPAGNASRGLPGGPPSTVASGAGRCE. Helical transmembrane passes span 29 to 49, 69 to 89, and 102 to 122; these read SGAL…VVAF, IWFL…FANV, and LYLI…YVGV. Residues 149-153 carry the GXXXG motif motif; it reads GAWVG. 2 helical membrane-spanning segments follow: residues 156 to 176 and 194 to 214; these read ALYI…LLIL and LAIV…WVVD. At 215–294 the chain is on the cytoplasmic side; it reads NFLMRKGKTK…KKKHRFGLPV (80 aa). The tract at residues 227–268 is disordered; that stretch reads LEERGANQDSRNGSKVRYRRAASHEESESEILISADDEMEES. The interval 241–246 is required for localization in the endoplasmic reticulum; it reads KVRYRR.

The protein belongs to the STIMATE family. Homooligomer. Interacts with STIM1. As to expression, widely expressed.

The protein localises to the endoplasmic reticulum membrane. Acts as a regulator of store-operated Ca(2+) entry (SOCE) at junctional sites that connect the endoplasmic reticulum (ER) and plasma membrane (PM), called ER-plasma membrane (ER-PM) junction or cortical ER. SOCE is a Ca(2+) influx following depletion of intracellular Ca(2+) stores. Acts by interacting with STIM1, promoting STIM1 conformational switch. Involved in STIM1 relocalization to ER-PM junctions. Contributes to the maintenance and reorganization of store-dependent ER-PM junctions. The sequence is that of Store-operated calcium entry regulator STIMATE from Homo sapiens (Human).